The primary structure comprises 233 residues: uncharacterized protein (233 aa).

2 disordered regions span residues 1–159 (MGKH…NEKL) and 181–206 (MGVKNAPKPTDDSSRLSDEKNRQDKM). The segment covering 36–115 (RDRSRSPHKE…RRDDKNRLSA (80 aa)) has biased composition (basic and acidic residues). A compositionally biased stretch (low complexity) spans 135–148 (SSSSNTTDTASSSS). Positions 189–206 (PTDDSSRLSDEKNRQDKM) are enriched in basic and acidic residues.

This is an uncharacterized protein from Caenorhabditis elegans.